Consider the following 455-residue polypeptide: Bifunctional protein GlmU (455 aa).

The segment at 1 to 226 is pyrophosphorylase; sequence MSLDIVILAA…PMEVQGANDR (226 aa). UDP-N-acetyl-alpha-D-glucosamine-binding positions include 8 to 11, Lys22, Gln73, 78 to 79, 99 to 101, Gly136, Glu151, Asn166, and Asn224; these read LAAG, GT, and YGD. Residue Asp101 participates in Mg(2+) binding. Asn224 serves as a coordination point for Mg(2+). The interval 227–247 is linker; sequence RQLSELERHYQLREGRRLMAQ. An N-acetyltransferase region spans residues 248–455; that stretch reads GVTLRDPARF…WKRPEKTKKS (208 aa). Residues Arg330 and Lys348 each contribute to the UDP-N-acetyl-alpha-D-glucosamine site. The active-site Proton acceptor is the His360. The UDP-N-acetyl-alpha-D-glucosamine site is built by Tyr363 and Asn374. Acetyl-CoA is bound by residues Ala377, 383-384, Ser402, Ala420, and Arg437; that span reads NY.

The protein in the N-terminal section; belongs to the N-acetylglucosamine-1-phosphate uridyltransferase family. In the C-terminal section; belongs to the transferase hexapeptide repeat family. In terms of assembly, homotrimer. The cofactor is Mg(2+).

The protein resides in the cytoplasm. The enzyme catalyses alpha-D-glucosamine 1-phosphate + acetyl-CoA = N-acetyl-alpha-D-glucosamine 1-phosphate + CoA + H(+). It catalyses the reaction N-acetyl-alpha-D-glucosamine 1-phosphate + UTP + H(+) = UDP-N-acetyl-alpha-D-glucosamine + diphosphate. It participates in nucleotide-sugar biosynthesis; UDP-N-acetyl-alpha-D-glucosamine biosynthesis; N-acetyl-alpha-D-glucosamine 1-phosphate from alpha-D-glucosamine 6-phosphate (route II): step 2/2. The protein operates within nucleotide-sugar biosynthesis; UDP-N-acetyl-alpha-D-glucosamine biosynthesis; UDP-N-acetyl-alpha-D-glucosamine from N-acetyl-alpha-D-glucosamine 1-phosphate: step 1/1. It functions in the pathway bacterial outer membrane biogenesis; LPS lipid A biosynthesis. Catalyzes the last two sequential reactions in the de novo biosynthetic pathway for UDP-N-acetylglucosamine (UDP-GlcNAc). The C-terminal domain catalyzes the transfer of acetyl group from acetyl coenzyme A to glucosamine-1-phosphate (GlcN-1-P) to produce N-acetylglucosamine-1-phosphate (GlcNAc-1-P), which is converted into UDP-GlcNAc by the transfer of uridine 5-monophosphate (from uridine 5-triphosphate), a reaction catalyzed by the N-terminal domain. This is Bifunctional protein GlmU from Pseudomonas putida (strain GB-1).